The sequence spans 677 residues: Beta-galactosidase (677 aa).

Positions 1–23 (MPGFLVRILPLLLALLLLGPTRG) are cleaved as a signal peptide. Residues 24 to 28 (LRNAT) constitute a propeptide that is removed on maturation. Residue Asn26 is glycosylated (N-linked (GlcNAc...) asparagine). Substrate is bound by residues Tyr83, Glu129, and Asn187. The Proton donor role is filled by Glu188. A disulfide bridge links Cys195 with Cys230. The N-linked (GlcNAc...) asparagine glycan is linked to Asn247. Residue Glu268 is the Nucleophile of the active site. Position 333 (Tyr333) interacts with substrate. Residues Asn464, Asn498, Asn545, and Asn555 are each glycosylated (N-linked (GlcNAc...) asparagine). A disulfide bond links Cys626 and Cys634. Residues 654 to 677 (SKPVEKKLMPSPPQKNKDSWLDHV) form a disordered region. A compositionally biased stretch (basic and acidic residues) spans 668-677 (KNKDSWLDHV).

The protein belongs to the glycosyl hydrolase 35 family. Homodimer. May form higher multimers.

The protein resides in the lysosome. It catalyses the reaction Hydrolysis of terminal non-reducing beta-D-galactose residues in beta-D-galactosides.. Functionally, cleaves beta-linked terminal galactosyl residues from gangliosides, glycoproteins, and glycosaminoglycans. This is Beta-galactosidase (GLB1) from Pongo abelii (Sumatran orangutan).